Reading from the N-terminus, the 187-residue chain is Protein Flattop (187 aa).

The segment at 97–187 is disordered; that stretch reads THSGHGIHTH…TPQLEREEPQ (91 aa). The segment covering 122 to 131 has biased composition (polar residues); the sequence is EGDQTCNAPT. Positions 169-187 are enriched in basic and acidic residues; sequence KRREQSLEETPQLEREEPQ.

It belongs to the Flattop family.

The protein localises to the cytoplasm. The protein resides in the cytoskeleton. It localises to the cilium basal body. It is found in the cell projection. Its subcellular location is the cilium. The protein localises to the apical cell membrane. The protein resides in the cilium axoneme. Functionally, microtubule inner protein (MIP) part of the dynein-decorated doublet microtubules (DMTs) in cilia axoneme. Acts as a regulator of cilium basal body docking and positioning in mono- and multiciliated cells. Regulates basal body docking and cilia formation in multiciliated lung cells. Regulates kinocilium positioning and stereocilia bundle morphogenesis in the inner ear. This chain is Protein Flattop, found in Salmo salar (Atlantic salmon).